A 186-amino-acid chain; its full sequence is Ribosome-recycling factor (186 aa).

This sequence belongs to the RRF family.

It is found in the cytoplasm. Responsible for the release of ribosomes from messenger RNA at the termination of protein biosynthesis. May increase the efficiency of translation by recycling ribosomes from one round of translation to another. The sequence is that of Ribosome-recycling factor from Porphyromonas gingivalis (strain ATCC BAA-308 / W83).